The primary structure comprises 56 residues: Genome polyprotein (56 aa).

A disordered region spans residues 1–30 (ETMLDRIASGDLESSVDDPRSAEDKRFESH). Residues 17 to 30 (DDPRSAEDKRFESH) are compositionally biased toward basic and acidic residues.

The protein belongs to the picornaviridae polyprotein family. As to quaternary structure, homopentamer. Homooligomer. In terms of assembly, interacts with capsid protein VP2. Interacts with capsid protein VP3. In terms of processing, specific enzymatic cleavages by viral protease in vivo yield a variety of precursors and mature proteins. Polyprotein processing intermediates are produced, such as P1-2A which is a functional precursor of the structural proteins, VP0 which is a VP4-VP2 precursor, VP1-2A precursor, 3ABC precursor which is a stable and catalytically active precursor of 3A, 3B and 3C proteins, 3AB and 3CD precursors. The assembly signal 2A is removed from VP1-2A by a host protease, possibly host Cathepsin L. This cleavage occurs over a region of 3 amino-acids probably generating VP1 proteins with heterogeneous C-termini. Post-translationally, the assembly signal 2A is removed from VP1-2A by a host protease, possibly host Cathepsin L in naked virions. This cleavage does not occur in enveloped virions. This cleavage occurs over a region of 3 amino-acids probably generating VP1 proteins with heterogeneous C-termini.

The protein localises to the virion. The protein resides in the host endosome. It is found in the host multivesicular body. Capsid proteins VP1, VP2, and VP3 form a closed capsid enclosing the viral positive strand RNA genome. All these proteins contain a beta-sheet structure called beta-barrel jelly roll. Together they form an icosahedral capsid (T=3) composed of 60 copies of each VP1, VP2, and VP3, with a diameter of approximately 300 Angstroms. VP1 is situated at the 12 fivefold axes, whereas VP2 and VP3 are located at the quasi-sixfold axes. The naked capsid interacts with the host receptor HAVCR1 to provide virion attachment to and probably entry into the target cell. Its function is as follows. Precursor component of immature procapsids that corresponds to an extended form of the structural protein VP1. After maturation, possibly by the host Cathepsin L, the assembly signal 2A is cleaved to give rise to the mature VP1 protein. The polypeptide is Genome polyprotein (Callithrix (Owl-faced monkey)).